Consider the following 284-residue polypeptide: D-tagatose-1,6-bisphosphate aldolase subunit GatY (284 aa).

Asp-82 serves as the catalytic Proton donor. The Zn(2+) site is built by His-83 and His-180. Gly-181 is a binding site for dihydroxyacetone phosphate. His-208 lines the Zn(2+) pocket. Residues 209-211 (GAS) and 230-233 (NVAT) contribute to the dihydroxyacetone phosphate site.

It belongs to the class II fructose-bisphosphate aldolase family. TagBP aldolase GatY subfamily. Forms a complex with GatZ. It depends on Zn(2+) as a cofactor.

The catalysed reaction is D-tagatofuranose 1,6-bisphosphate = D-glyceraldehyde 3-phosphate + dihydroxyacetone phosphate. Its pathway is carbohydrate metabolism; D-tagatose 6-phosphate degradation; D-glyceraldehyde 3-phosphate and glycerone phosphate from D-tagatose 6-phosphate: step 2/2. Catalytic subunit of the tagatose-1,6-bisphosphate aldolase GatYZ, which catalyzes the reversible aldol condensation of dihydroxyacetone phosphate (DHAP or glycerone-phosphate) with glyceraldehyde 3-phosphate (G3P) to produce tagatose 1,6-bisphosphate (TBP). Requires GatZ subunit for full activity and stability. Is involved in the catabolism of galactitol. This is D-tagatose-1,6-bisphosphate aldolase subunit GatY from Shigella boydii serotype 4 (strain Sb227).